The following is a 359-amino-acid chain: Putative nucleotidyltransferase MAB21L1 (359 aa).

Residues 23–24 (RK) and 63–66 (YEGL) contribute to the a ribonucleoside 5'-triphosphate site. 2 residues coordinate Mg(2+): glutamate 73 and glutamate 75. A ribonucleoside 5'-triphosphate-binding positions include lysine 248 and 252–255 (SLLK).

This sequence belongs to the mab-21 family. In terms of assembly, monomer. Homodecamer; composed of 2 back to back homopentamers. The protein may exist as monomer in solution and oiligomerizes upon ligand binding.

It localises to the nucleus. Its function is as follows. Putative nucleotidyltransferase required for several aspects of embryonic development including normal development of the eye. It is unclear whether it displays nucleotidyltransferase activity in vivo. Binds single-stranded RNA (ssRNA). The protein is Putative nucleotidyltransferase MAB21L1 (mab21l1) of Xenopus tropicalis (Western clawed frog).